We begin with the raw amino-acid sequence, 223 residues long: Twisted gastrulation protein homolog 1 (223 aa).

The signal sequence occupies residues 1 to 25 (MKLHYVAVLTLAILMFLTWLPASLS). Asn52 and Asn81 each carry an N-linked (GlcNAc...) asparagine glycan.

This sequence belongs to the twisted gastrulation protein family. As to quaternary structure, interacts with CHRD and BMP4. This interaction enhances CHRD/BMP4 complex formation. Interacts with BMP7.

It localises to the secreted. May be involved in dorsoventral axis formation. Seems to antagonize BMP signaling by forming ternary complexes with CHRD and BMPs, thereby preventing BMPs from binding to their receptors. In addition to the anti-BMP function, also has pro-BMP activity, partly mediated by cleavage and degradation of CHRD, which releases BMPs from ternary complexes. May be an important modulator of BMP-regulated cartilage development and chondrocyte differentiation. May play a role in thymocyte development. The chain is Twisted gastrulation protein homolog 1 (TWSG1) from Pongo abelii (Sumatran orangutan).